The chain runs to 317 residues: DNA-directed RNA polymerase subunit alpha (317 aa).

Residues 1 to 234 form an alpha N-terminal domain (alpha-NTD) region; it reads MKQFNKPEFG…SHFDVFTTLA (234 aa). Residues 249–317 are alpha C-terminal domain (alpha-CTD); the sequence is EEKELDKPVE…AALELTFKQN (69 aa).

It belongs to the RNA polymerase alpha chain family. In terms of assembly, homodimer. The RNAP catalytic core consists of 2 alpha, 1 beta, 1 beta' and 1 omega subunit. When a sigma factor is associated with the core the holoenzyme is formed, which can initiate transcription.

The catalysed reaction is RNA(n) + a ribonucleoside 5'-triphosphate = RNA(n+1) + diphosphate. In terms of biological role, DNA-dependent RNA polymerase catalyzes the transcription of DNA into RNA using the four ribonucleoside triphosphates as substrates. In Mesoplasma florum (strain ATCC 33453 / NBRC 100688 / NCTC 11704 / L1) (Acholeplasma florum), this protein is DNA-directed RNA polymerase subunit alpha.